Here is a 148-residue protein sequence, read N- to C-terminus: 15 kDa excretory/secretory protein (148 aa).

Residues 1 to 19 (MFFAFAVLLIALATREAYG) form the signal peptide.

To T.colubriformis 30 kDa antigenic glycoprotein.

It is found in the secreted. The polypeptide is 15 kDa excretory/secretory protein (Haemonchus contortus (Barber pole worm)).